Here is a 1538-residue protein sequence, read N- to C-terminus: Phenolphthiocerol/phthiocerol polyketide synthase subunit B (1538 aa).

A Ketosynthase family 3 (KS3) domain is found at 33-455 (AEPVAVVGIG…GTNAHVIIEQ (423 aa)). Active-site for beta-ketoacyl synthase activity residues include Cys205, His340, and His377. The acyltransferase stretch occupies residues 553–882 (DGSPGPGTVF…TNLYTADIAH (330 aa)). Ser649 (for malonyltransferase activity) is an active-site residue. 1153–1196 (SQLVIGATGNIGPHLIRQLARMGAKTIVAMARKPGALDELTQCL) lines the NADP(+) pocket. The interval 1153–1328 (SQLVIGATGN…TVVDWGLWKS (176 aa)) is beta-ketoacyl reductase. Residues 1423–1498 (DMLFDHVGAL…SLTDYLATVL (76 aa)) enclose the Carrier domain. Ser1458 carries the O-(pantetheine 4'-phosphoryl)serine modification.

It depends on NADP(+) as a cofactor. Pantetheine 4'-phosphate serves as cofactor.

It carries out the reaction icosanoyl-[(phenol)carboxyphthiodiolenone synthase] + 2 (S)-methylmalonyl-CoA + 3 malonyl-CoA + 5 NADPH + 10 H(+) = C32-carboxyphthiodiolenone-[(phenol)carboxyphthiodiolenone synthase] + 5 CO2 + 5 NADP(+) + 5 CoA + 2 H2O. The catalysed reaction is docosanoyl-[(phenol)carboxyphthiodiolenone synthase] + 2 (S)-methylmalonyl-CoA + 3 malonyl-CoA + 5 NADPH + 10 H(+) = C34-carboxyphthiodiolenone-[(phenol)carboxyphthiodiolenone synthase] + 5 CO2 + 5 NADP(+) + 5 CoA + 2 H2O. The enzyme catalyses 17-(4-hydroxyphenyl)heptadecanoyl-[(phenol)carboxyphthiodiolenone synthase] + 2 (S)-methylmalonyl-CoA + 3 malonyl-CoA + 5 NADPH + 10 H(+) = C35-(phenol)carboxyphthiodiolenone-[(phenol)carboxyphthiodiolenone synthase] + 5 CO2 + 5 NADP(+) + 5 CoA + 2 H2O. It catalyses the reaction 19-(4-hydroxyphenyl)nonadecanoyl-[(phenol)carboxyphthiodiolenone synthase] + 2 (S)-methylmalonyl-CoA + 3 malonyl-CoA + 5 NADPH + 10 H(+) = C37-(phenol)carboxyphthiodiolenone-[(phenol)carboxyphthiodiolenone synthase] + 5 CO2 + 5 NADP(+) + 5 CoA + 2 H2O. The protein operates within lipid metabolism; fatty acid biosynthesis. Its function is as follows. Part of the PpsABCDE complex involved in the biosynthesis of the lipid core common to phthiocerols and phenolphthiocerols by successive additions of malonyl-CoA or methylmalonyl-CoA extender units. PpsA can accept as substrate the activated forms of either icosanoyl (C20), docosanoyl (C22) or lignoceroyl (C24) groups from FadD26, or a (4-hydroxyphenyl)-C17 or (4-hydroxyphenyl)-C19 fatty acyl from FadD29. PpsA initiates the biosynthesis and extends its substrate using a malonyl-CoA extender unit. The PpsB and PpsC proteins add the second and third malonyl-CoA extender units. PpsD adds an (R)-methylmalonyl unit and PpsE adds a second (R)-methylmalonyl unit. The incorporation of the methylmalonyl units results in formation of two branched methyl groups in the elongated product. The polypeptide is Phenolphthiocerol/phthiocerol polyketide synthase subunit B (ppsB) (Mycobacterium tuberculosis (strain CDC 1551 / Oshkosh)).